The primary structure comprises 255 residues: 3-deoxy-manno-octulosonate cytidylyltransferase (255 aa).

Belongs to the KdsB family.

It is found in the cytoplasm. The catalysed reaction is 3-deoxy-alpha-D-manno-oct-2-ulosonate + CTP = CMP-3-deoxy-beta-D-manno-octulosonate + diphosphate. The protein operates within nucleotide-sugar biosynthesis; CMP-3-deoxy-D-manno-octulosonate biosynthesis; CMP-3-deoxy-D-manno-octulosonate from 3-deoxy-D-manno-octulosonate and CTP: step 1/1. Its pathway is bacterial outer membrane biogenesis; lipopolysaccharide biosynthesis. Its function is as follows. Activates KDO (a required 8-carbon sugar) for incorporation into bacterial lipopolysaccharide in Gram-negative bacteria. The polypeptide is 3-deoxy-manno-octulosonate cytidylyltransferase (Glaesserella parasuis serovar 5 (strain SH0165) (Haemophilus parasuis)).